A 259-amino-acid chain; its full sequence is UPF0014 membrane protein slr1647 (259 aa).

A run of 7 helical transmembrane segments spans residues 4 to 24, 34 to 54, 55 to 75, 98 to 118, 128 to 148, 195 to 215, and 225 to 245; these read ALIE…GAAI, LTGQ…VVGY, FLAV…LAIM, LWLS…VVII, YLIP…SLAG, MMVV…LAGG, and ILIM…VTAT.

This sequence belongs to the UPF0014 family.

The protein localises to the cell membrane. The sequence is that of UPF0014 membrane protein slr1647 from Synechocystis sp. (strain ATCC 27184 / PCC 6803 / Kazusa).